The following is a 434-amino-acid chain: GTPase Obg (434 aa).

Positions 1–158 constitute an Obg domain; it reads MFLDTAKIKV…RELQLELKIL (158 aa). The OBG-type G domain maps to 159–336; it reads ADVGLVGFPS…LLDATAELLD (178 aa). GTP contacts are provided by residues 165–172, 190–194, 212–215, 282–285, and 317–319; these read GFPSVGKS, FTTIV, DLPG, NKMD, and SGL. Mg(2+) is bound by residues serine 172 and threonine 192. The OCT domain maps to 356–434; it reads GFDEEEKAFE…IGKFEFEFVD (79 aa).

This sequence belongs to the TRAFAC class OBG-HflX-like GTPase superfamily. OBG GTPase family. In terms of assembly, monomer. Mg(2+) is required as a cofactor.

The protein resides in the cytoplasm. An essential GTPase which binds GTP, GDP and possibly (p)ppGpp with moderate affinity, with high nucleotide exchange rates and a fairly low GTP hydrolysis rate. Plays a role in control of the cell cycle, stress response, ribosome biogenesis and in those bacteria that undergo differentiation, in morphogenesis control. This chain is GTPase Obg, found in Streptococcus pneumoniae serotype 19F (strain G54).